Here is a 759-residue protein sequence, read N- to C-terminus: 1,4-alpha-glucan branching enzyme GlgB (759 aa).

Asp431 functions as the Nucleophile in the catalytic mechanism. The active-site Proton donor is Glu484.

It belongs to the glycosyl hydrolase 13 family. GlgB subfamily. In terms of assembly, monomer.

It catalyses the reaction Transfers a segment of a (1-&gt;4)-alpha-D-glucan chain to a primary hydroxy group in a similar glucan chain.. It functions in the pathway glycan biosynthesis; glycogen biosynthesis. Functionally, catalyzes the formation of the alpha-1,6-glucosidic linkages in glycogen by scission of a 1,4-alpha-linked oligosaccharide from growing alpha-1,4-glucan chains and the subsequent attachment of the oligosaccharide to the alpha-1,6 position. This chain is 1,4-alpha-glucan branching enzyme GlgB, found in Prochlorococcus marinus (strain MIT 9211).